Here is a 605-residue protein sequence, read N- to C-terminus: Alanine--tRNA ligase (605 aa).

Residues H463, H467, C565, and H569 each coordinate Zn(2+).

It belongs to the class-II aminoacyl-tRNA synthetase family. Zn(2+) is required as a cofactor.

It is found in the cytoplasm. It carries out the reaction tRNA(Ala) + L-alanine + ATP = L-alanyl-tRNA(Ala) + AMP + diphosphate. In terms of biological role, catalyzes the attachment of alanine to tRNA(Ala) in a two-step reaction: alanine is first activated by ATP to form Ala-AMP and then transferred to the acceptor end of tRNA(Ala). Also edits incorrectly charged Ser-tRNA(Ala) and Gly-tRNA(Ala) via its editing domain. The polypeptide is Alanine--tRNA ligase (alaS) (Treponema pallidum (strain Nichols)).